The chain runs to 267 residues: Tryptophan synthase alpha chain (267 aa).

Catalysis depends on proton acceptor residues Glu-49 and Asp-60.

Belongs to the TrpA family. As to quaternary structure, tetramer of two alpha and two beta chains.

The enzyme catalyses (1S,2R)-1-C-(indol-3-yl)glycerol 3-phosphate + L-serine = D-glyceraldehyde 3-phosphate + L-tryptophan + H2O. It participates in amino-acid biosynthesis; L-tryptophan biosynthesis; L-tryptophan from chorismate: step 5/5. In terms of biological role, the alpha subunit is responsible for the aldol cleavage of indoleglycerol phosphate to indole and glyceraldehyde 3-phosphate. This is Tryptophan synthase alpha chain from Geobacter sp. (strain M21).